The chain runs to 593 residues: F-box/LRR-repeat protein 17 (593 aa).

In terms of domain architecture, F-box spans 120-177 (DLDLQLDTDIVQPGRFHAVGLWEVLKRLPPSSLLMAARVCKGWRETSRKMWKAAEELR). LRR repeat units follow at residues 178–206 (IRVPERAQIGYIGSLLQKCPRLIRLSLKI), 207–232 (ESDFDATTLACIAFSCPNLEVLEITT), 237–262 (VNRISGDELSRFVANKRGLTSLKMEG), 276–304 (LSTLWLSDLHSLSKMIFNCPNLTEISLEF), 335–361 (SLKLSHTVVLSLTAVNFRYLRMLSLVL), 362–387 (GINITDASVAAISSGYKNLELLDLSG), 414–439 (CPNITSSGIQFATAQLPLLELMDCGM), 477–502 (LSLWGCSSLDALFLNCPELMDLNLNL), and 503–525 (CSNLHPESLVLQCPKLQLVYASG).

Part of a SCF (ASK-cullin-F-box) protein ligase complex. Interacts with SKP1A/ASK1, KRP4, KRP6 and KRP7. Expressed in developing pollen.

The protein resides in the nucleus. It functions in the pathway protein modification; protein ubiquitination. Its function is as follows. Essential protein for male fertility. Component of the SCF(ASK-cullin-F-box) E3 ubiquitin ligase complex SCF(FBL17), which mediates the ubiquitination and subsequent proteasomal degradation of target proteins. Enables the switch in cell cycle control leading to male germ cell lineage formation from microspores after meiosis. Targets CDKA-1 inhibitors the degradation specifically in male germ cells (e.g. KRP6 and KRP7) and thus enables CDKA-1 activation and germ cell S-phase progression. Promotes twin sperm cell production and double fertilization. This is F-box/LRR-repeat protein 17 (FBL17) from Arabidopsis thaliana (Mouse-ear cress).